Reading from the N-terminus, the 156-residue chain is Small ribosomal subunit protein uS7 (156 aa).

This sequence belongs to the universal ribosomal protein uS7 family. In terms of assembly, part of the 30S ribosomal subunit. Contacts proteins S9 and S11.

In terms of biological role, one of the primary rRNA binding proteins, it binds directly to 16S rRNA where it nucleates assembly of the head domain of the 30S subunit. Is located at the subunit interface close to the decoding center, probably blocks exit of the E-site tRNA. This chain is Small ribosomal subunit protein uS7, found in Thermoanaerobacter pseudethanolicus (strain ATCC 33223 / 39E) (Clostridium thermohydrosulfuricum).